The following is a 405-amino-acid chain: Interferon alpha/beta receptor 1a (405 aa).

An N-terminal signal peptide occupies residues 1–20; the sequence is MKVGFALVLLWSLPITNVLA. The Extracellular portion of the chain corresponds to 21 to 233; the sequence is ELPQPQNLTL…QTEGDTPYGQ (213 aa). Fibronectin type-III domains are found at residues 22–123 and 126–228; these read LPQP…IDAS and PPSR…TEGD. N-linked (GlcNAc...) asparagine glycosylation is found at Asn27 and Asn70. Disulfide bonds link Cys75–Cys83 and Cys201–Cys222. A glycan (N-linked (GlcNAc...) asparagine) is linked at Asn212. A helical membrane pass occupies residues 234–254; it reads IFLYFLVSMMVCFLLVLLSSY. At 255-405 the chain is on the cytoplasmic side; sequence AFFRFYRGLK…LDEGVVDICV (151 aa). The interval 325–374 is disordered; it reads TAPPSELEQDSGRRIRQDSGDSGIYSTEGGSAQQGRSGGEPIRRDQEVDS. Residues 334-343 show a composition bias toward basic and acidic residues; that stretch reads DSGRRIRQDS. The segment covering 348 to 359 has biased composition (polar residues); sequence IYSTEGGSAQQG.

This sequence belongs to the type II cytokine receptor family. In terms of assembly, heterodimer with IFNAR2; forming the receptor for type I interferon.

The protein resides in the cell membrane. In terms of biological role, together with IFNAR2, forms the heterodimeric receptor for type I interferons (including interferons alpha, beta, epsilon, omega and kappa). Type I interferon binding activates the JAK-STAT signaling cascade, resulting in transcriptional activation or repression of interferon-regulated genes that encode the effectors of the interferon response. Mechanistically, type I interferon-binding brings the IFNAR1 and IFNAR2 subunits into close proximity with one another, driving their associated Janus kinases (JAKs) (TYK2 bound to IFNAR1 and JAK1 bound to IFNAR2) to cross-phosphorylate one another. The activated kinases phosphorylate specific tyrosine residues on the intracellular domains of IFNAR1 and IFNAR2, forming docking sites for the STAT transcription factors. STAT proteins are then phosphorylated by the JAKs, promoting their translocation into the nucleus to regulate expression of interferon-regulated genes. This Oncorhynchus mykiss (Rainbow trout) protein is Interferon alpha/beta receptor 1a.